A 439-amino-acid polypeptide reads, in one-letter code: 26S proteasome regulatory subunit 6A (439 aa).

Met1 is modified (N-acetylmethionine). Position 9 is a phosphoserine (Ser9). Residue 227–234 coordinates ATP; that stretch reads GPPGTGKT. Residue Ser376 is modified to Phosphoserine.

It belongs to the AAA ATPase family. Component of the 19S proteasome regulatory particle complex. The 26S proteasome consists of a 20S core particle (CP) and two 19S regulatory subunits (RP). The regulatory particle is made of a lid composed of 9 subunits, a base containing 6 ATPases including PSMC3 and few additional components. Interacts with PAAF1.

The protein localises to the cytoplasm. Its subcellular location is the nucleus. Functionally, component of the 26S proteasome, a multiprotein complex involved in the ATP-dependent degradation of ubiquitinated proteins. This complex plays a key role in the maintenance of protein homeostasis by removing misfolded or damaged proteins, which could impair cellular functions, and by removing proteins whose functions are no longer required. Therefore, the proteasome participates in numerous cellular processes, including cell cycle progression, apoptosis, or DNA damage repair. PSMC3 belongs to the heterohexameric ring of AAA (ATPases associated with diverse cellular activities) proteins that unfolds ubiquitinated target proteins that are concurrently translocated into a proteolytic chamber and degraded into peptides. The protein is 26S proteasome regulatory subunit 6A (Psmc3) of Rattus norvegicus (Rat).